The chain runs to 1328 residues: Mitogen-activated protein kinase kinase kinase 19 (1328 aa).

A compositionally biased stretch (basic and acidic residues) spans 1–19 (MSSMPKPERHAESLLDICH). Disordered stretches follow at residues 1–28 (MSSM…PTDL), 44–74 (RSEE…QDWQ), 344–380 (VREE…AKNY), and 524–561 (QEND…GPIK). The span at 344-361 (VREEDIDCHGSKTRKPEE) shows a compositional bias: basic and acidic residues. Over residues 364–377 (SQYLSSRKNESSVA) the composition is skewed to polar residues. The segment covering 524 to 542 (QENDKHKMNSHRSKLDSKT) has biased composition (basic and acidic residues). The Protein kinase domain maps to 1061–1324 (WTKGEILGKG…ALQLLKHSFL (264 aa)). ATP-binding positions include 1067–1075 (LGKGAYGTV) and Lys-1089. The active-site Proton acceptor is Asp-1186.

The protein belongs to the protein kinase superfamily. STE Ser/Thr protein kinase family. STE20 subfamily.

The catalysed reaction is L-seryl-[protein] + ATP = O-phospho-L-seryl-[protein] + ADP + H(+). The enzyme catalyses L-threonyl-[protein] + ATP = O-phospho-L-threonyl-[protein] + ADP + H(+). This chain is Mitogen-activated protein kinase kinase kinase 19 (MAP3K19), found in Homo sapiens (Human).